A 320-amino-acid chain; its full sequence is L-lactate dehydrogenase 2 (320 aa).

NAD(+) contacts are provided by V16, D37, K42, and Y69. A substrate-binding site is contributed by R94. NAD(+)-binding positions include S107, 124–126 (VTN), and T149. 126 to 129 (NPVD) lines the substrate pocket. Residue 154–157 (DTAR) coordinates substrate. Beta-D-fructose 1,6-bisphosphate contacts are provided by R159 and H174. The active-site Proton acceptor is H181. T235 is a substrate binding site.

It belongs to the LDH/MDH superfamily. LDH family. Homotetramer.

It localises to the cytoplasm. It catalyses the reaction (S)-lactate + NAD(+) = pyruvate + NADH + H(+). Its pathway is fermentation; pyruvate fermentation to lactate; (S)-lactate from pyruvate: step 1/1. Its activity is regulated as follows. Allosterically activated by fructose 1,6-bisphosphate (FBP). Its function is as follows. Catalyzes the conversion of lactate to pyruvate. This chain is L-lactate dehydrogenase 2, found in Clostridium acetobutylicum (strain ATCC 824 / DSM 792 / JCM 1419 / IAM 19013 / LMG 5710 / NBRC 13948 / NRRL B-527 / VKM B-1787 / 2291 / W).